We begin with the raw amino-acid sequence, 712 residues long: Rap1 GTPase-activating protein 2 (712 aa).

A disordered region spans residues Met-1 to Pro-33. The residue at position 26 (Ser-26) is a Phosphoserine. Thr-30 bears the Phosphothreonine mark. The Rap-GAP domain occupies Ile-229–Leu-445. Ser-488, Ser-495, Ser-525, Ser-539, Ser-545, Ser-593, and Ser-594 each carry phosphoserine. The disordered stretch occupies residues Ala-529 to His-712. Residues Asp-566–Ser-594 are compositionally biased toward polar residues. Residues Pro-599–Gly-612 are compositionally biased toward basic and acidic residues. Residues Ser-617–Thr-629 are compositionally biased toward low complexity. Polar residues predominate over residues Ser-641 to Phe-652. A compositionally biased stretch (low complexity) spans Ser-660–Ser-669. Positions Arg-681–Ser-694 are enriched in polar residues.

It is found in the cytoplasm. Functionally, GTPase activator for the nuclear Ras-related regulatory protein RAP-1A (KREV-1), converting it to the putatively inactive GDP-bound state. The protein is Rap1 GTPase-activating protein 2 (Rap1gap2) of Mus musculus (Mouse).